The primary structure comprises 532 residues: MRVLGVEGTAWCASAALYDADAAADSVVIESDAYQPDSGGIHPREAAEHMREAIPAVIETVLGAADGDIDAVAFSRGPGLGPCLRIVGSAARALAQALDVPLVGVNHMVAHLEIGRHQSGFQQPVCLNASGANAHVLAYRNGRYRVLGETMDTGVGNAIDKFTRHVGWQHPGGPKVETHARDGEYTALPYVVKGMDFSFSGIMSAAKDAVDDGVPVADVCRGLEETMFAMLTEVAERALALTGRDELVLGGGVGQNDRLRGMLEAMCAARGASFHAPEPRFLRDNAGMIAVLGAKMAAAGATIPVADSAINSQFRPDEVSVTWRDPESPARDPGADAVRQGAEATVTFADDAVIKERAPKAYRHDRLDDRLRRDRTVLEARLTSDARRQGVPTPLVRDVDVPAATITLQHVGDADLRDALSPARVRAVGRHLATIHDGGFVHGDPTTRNVRVGAERTFLIDFGLGYYTDAVEDYAMDCHVFEQSLVGTAADADALVAAFEDAYEEAAASGRVLDQLRAVEGRGRYQDDPETA.

The segment at M1–W323 is kae1. 2 residues coordinate Fe cation: H107 and H111. Residues N128–A132, D160, G173, E177, and N256 contribute to the L-threonylcarbamoyladenylate site. D284 is a binding site for Fe cation. Residues P329 to A532 form the Protein kinase domain. ATP-binding positions include V338 to V346 and K355. The active-site Proton acceptor; for kinase activity is the D444.

This sequence in the N-terminal section; belongs to the KAE1 / TsaD family. The protein in the C-terminal section; belongs to the protein kinase superfamily. Tyr protein kinase family. BUD32 subfamily. As to quaternary structure, component of the KEOPS complex that consists of Kae1, Bud32, Cgi121 and Pcc1; the whole complex dimerizes. Fe(2+) is required as a cofactor.

It is found in the cytoplasm. The catalysed reaction is L-seryl-[protein] + ATP = O-phospho-L-seryl-[protein] + ADP + H(+). It carries out the reaction L-threonyl-[protein] + ATP = O-phospho-L-threonyl-[protein] + ADP + H(+). The enzyme catalyses L-threonylcarbamoyladenylate + adenosine(37) in tRNA = N(6)-L-threonylcarbamoyladenosine(37) in tRNA + AMP + H(+). Required for the formation of a threonylcarbamoyl group on adenosine at position 37 (t(6)A37) in tRNAs that read codons beginning with adenine. Is a component of the KEOPS complex that is probably involved in the transfer of the threonylcarbamoyl moiety of threonylcarbamoyl-AMP (TC-AMP) to the N6 group of A37. The Kae1 domain likely plays a direct catalytic role in this reaction. The Bud32 domain probably displays kinase activity that regulates Kae1 function. The sequence is that of Probable bifunctional tRNA threonylcarbamoyladenosine biosynthesis protein from Halobacterium salinarum (strain ATCC 700922 / JCM 11081 / NRC-1) (Halobacterium halobium).